The following is a 571-amino-acid chain: uncharacterized protein (571 aa).

Residues 1–3 lie on the Cytoplasmic side of the membrane; sequence MNS. Residues 4-24 traverse the membrane as a helical segment; it reads LQILSFVGFTLLVAVITWWKV. Residues 25-74 lie on the Periplasmic side of the membrane; that stretch reads RKTDTGSQQGYFLAGRSLKAPVIAASLMLTNLSTEQLVGLSGQAYKSGMS. The helical transmembrane segment at 75–95 threads the bilayer; sequence VMGWEVTSAVTLIFLALIFLP. Topologically, residues 96-118 are cytoplasmic; that stretch reads RYLKRGIATIPDFLEERYDKTTR. The helical transmembrane segment at 119–139 threads the bilayer; the sequence is IIIDFCFLIATGVCFLPIVLY. Topologically, residues 140–162 are periplasmic; it reads SGALALNSLFHVGESLQISHGAA. Residues 163-183 traverse the membrane as a helical segment; that stretch reads IWLLVILLGLAGILYAVIGGL. Residues 184 to 191 are Cytoplasmic-facing; that stretch reads RAMAVADS. Residues 192–212 traverse the membrane as a helical segment; sequence INGIGLVIGGLMVPVFGLIAM. Over 213–240 the chain is Periplasmic; it reads GKGSFMQGIEQLTTVHAEKLNSIGGPTD. The helical transmembrane segment at 241 to 261 threads the bilayer; sequence PLPIGAAFTGLILVNTFYWCT. Residues 262–283 are Cytoplasmic-facing; it reads NQGIVQRTLASKSLAEGQKGAL. The helical transmembrane segment at 284 to 304 threads the bilayer; the sequence is LTAVLKMLDPLVLVLPGLIAF. The Periplasmic segment spans residues 305–324; sequence HLYQDLPKADMAYPTLVNNV. A helical transmembrane segment spans residues 325-345; sequence LPVPMVGFFGAVLFGAVISTF. Residues 346–380 are Cytoplasmic-facing; that stretch reads NGFLNSASTLFSMGIYRRIINQNAEPQQLVTVGRK. A helical transmembrane segment spans residues 381 to 401; the sequence is FGFFIAIVSVLVAPWIANAPQ. At 402-415 the chain is on the periplasmic side; that stretch reads GLYSWMKQLNGIYN. The chain crosses the membrane as a helical span at residues 416-436; the sequence is VPLVTIIIMGFFFPRIPALAA. Lys-437 is a topological domain (cytoplasmic). A helical transmembrane segment spans residues 438–458; that stretch reads VAMGIGIISYITINYLVKFDF. Residues 459 to 460 are Periplasmic-facing; sequence HF. A helical transmembrane segment spans residues 461 to 481; the sequence is LYVLACTFCINVVVMLVIGFI. Over 482–505 the chain is Cytoplasmic; sequence KPRATPFTFKDAFAVDMKPWKNVK. The chain crosses the membrane as a helical span at residues 506–526; it reads IASIGILFAMIGVYAGLAEFG. The Periplasmic portion of the chain corresponds to 527–532; that stretch reads GYGTRW. The chain crosses the membrane as a helical span at residues 533–553; that stretch reads LAMISYFIAAVVIVYLIFDSW. The Cytoplasmic segment spans residues 554–571; the sequence is RHRHDPAVTFTPDGKDSL.

The protein belongs to the sodium:solute symporter (SSF) (TC 2.A.21) family.

Its subcellular location is the cell inner membrane. This is an uncharacterized protein from Escherichia coli (strain K12).